The following is a 337-amino-acid chain: DNA-directed RNA polymerase subunit alpha (337 aa).

Positions 1–233 (MVREKVTVST…DLFIPFLHME (233 aa)) are alpha N-terminal domain (alpha-NTD). Residues 265–337 (KKIALKSIFI…FVIDLAKNKF (73 aa)) form an alpha C-terminal domain (alpha-CTD) region.

The protein belongs to the RNA polymerase alpha chain family. In terms of assembly, in plastids the minimal PEP RNA polymerase catalytic core is composed of four subunits: alpha, beta, beta', and beta''. When a (nuclear-encoded) sigma factor is associated with the core the holoenzyme is formed, which can initiate transcription.

It localises to the plastid. The protein localises to the chloroplast. The catalysed reaction is RNA(n) + a ribonucleoside 5'-triphosphate = RNA(n+1) + diphosphate. In terms of biological role, DNA-dependent RNA polymerase catalyzes the transcription of DNA into RNA using the four ribonucleoside triphosphates as substrates. This chain is DNA-directed RNA polymerase subunit alpha, found in Nicotiana sylvestris (Wood tobacco).